Consider the following 249-residue polypeptide: DNA repair protein RecO (249 aa).

It belongs to the RecO family.

Its function is as follows. Involved in DNA repair and RecF pathway recombination. This Mycoplasma capricolum subsp. capricolum (strain California kid / ATCC 27343 / NCTC 10154) protein is DNA repair protein RecO.